We begin with the raw amino-acid sequence, 88 residues long: Large ribosomal subunit protein bL27 (88 aa).

The tract at residues 1 to 22 (MAHKKGASSSRNGRDSNAQRLG) is disordered. The segment covering 7–19 (ASSSRNGRDSNAQ) has biased composition (polar residues).

It belongs to the bacterial ribosomal protein bL27 family.

In Mycolicibacterium gilvum (strain PYR-GCK) (Mycobacterium gilvum (strain PYR-GCK)), this protein is Large ribosomal subunit protein bL27.